The following is a 278-amino-acid chain: Cation-dependent mannose-6-phosphate receptor (278 aa).

An N-terminal signal peptide occupies residues 1–21 (MFPFSGCWRTELLLLLLLAVA). At 22–186 (VRESWQIEEK…SLACSPEVSH (165 aa)) the chain is on the lumenal side. Positions 31–182 (KSCDLVGEKD…EMDSSLACSP (152 aa)) constitute an MRH domain. A disulfide bridge links cysteine 33 with cysteine 79. N-linked (GlcNAc...) asparagine glycans are attached at residues asparagine 58, asparagine 84, asparagine 95, asparagine 108, and asparagine 114. 2 cysteine pairs are disulfide-bonded: cysteine 133/cysteine 168 and cysteine 146/cysteine 180. Residues 187 to 211 (LSVGSILLVIFASLVAVYIIGGFLY) traverse the membrane as a helical segment. Residues 212–278 (QRLVVGAKGM…EERDDHLLPM (67 aa)) are Cytoplasmic-facing. Positions 257–278 (RGVGDDQLGEESEERDDHLLPM) are disordered. Position 268 is a phosphoserine (serine 268).

In terms of assembly, homodimer. Binds GGA1, GGA2 and GGA3.

It is found in the lysosome membrane. Transport of phosphorylated lysosomal enzymes from the Golgi complex and the cell surface to lysosomes. Lysosomal enzymes bearing phosphomannosyl residues bind specifically to mannose-6-phosphate receptors in the Golgi apparatus and the resulting receptor-ligand complex is transported to an acidic prelyosomal compartment where the low pH mediates the dissociation of the complex. The protein is Cation-dependent mannose-6-phosphate receptor (M6pr) of Mus musculus (Mouse).